The chain runs to 277 residues: MRLRFTKMHGLGNDFVMIDAISQRVTITPERARQLADRHFGVGCDQVLVVETPDSPDADFKYRIFNHDGSEVENCGNGARCFAVFVRQRGLTAKSVITVETAVGRMVLHVQEDDQVTVDMGAPILSPADIPLAAPQQATSYTLPTQGAGDITIGAVSMGNPHAVYCVNDCKTAPVETLGPEIEAHPHFPKKVNAGFMQVVSPSEINLRVYERGAGETLACGTGACAAVVAGRLQGLLENTVKVNLPGGSLSITWEGVDSPVMMTGPATTVFHGQVKI.

Substrate-binding residues include asparagine 13, glutamine 46, and asparagine 66. Cysteine 75 (proton donor) is an active-site residue. Substrate contacts are provided by residues 76–77 (GN), asparagine 160, asparagine 193, and 211–212 (ER). Cysteine 220 functions as the Proton acceptor in the catalytic mechanism. Residue 221–222 (GT) coordinates substrate.

Belongs to the diaminopimelate epimerase family. Homodimer.

The protein localises to the cytoplasm. The enzyme catalyses (2S,6S)-2,6-diaminopimelate = meso-2,6-diaminopimelate. It functions in the pathway amino-acid biosynthesis; L-lysine biosynthesis via DAP pathway; DL-2,6-diaminopimelate from LL-2,6-diaminopimelate: step 1/1. Its function is as follows. Catalyzes the stereoinversion of LL-2,6-diaminopimelate (L,L-DAP) to meso-diaminopimelate (meso-DAP), a precursor of L-lysine and an essential component of the bacterial peptidoglycan. This is Diaminopimelate epimerase from Saccharophagus degradans (strain 2-40 / ATCC 43961 / DSM 17024).